We begin with the raw amino-acid sequence, 917 residues long: Alanine--tRNA ligase (917 aa).

Zn(2+)-binding residues include His592, His596, Cys694, and His698.

It belongs to the class-II aminoacyl-tRNA synthetase family. Zn(2+) serves as cofactor.

It is found in the cytoplasm. It catalyses the reaction tRNA(Ala) + L-alanine + ATP = L-alanyl-tRNA(Ala) + AMP + diphosphate. Its function is as follows. Catalyzes the attachment of alanine to tRNA(Ala) in a two-step reaction: alanine is first activated by ATP to form Ala-AMP and then transferred to the acceptor end of tRNA(Ala). Also edits incorrectly charged Ser-tRNA(Ala) and Gly-tRNA(Ala) via its editing domain. This chain is Alanine--tRNA ligase, found in Sorangium cellulosum (strain So ce56) (Polyangium cellulosum (strain So ce56)).